Reading from the N-terminus, the 286-residue chain is 4-diphosphocytidyl-2-C-methyl-D-erythritol kinase (286 aa).

The active site involves Lys-12. 96 to 106 serves as a coordination point for ATP; it reads PHGAGLGGGSA. Asp-138 is a catalytic residue.

Belongs to the GHMP kinase family. IspE subfamily.

It catalyses the reaction 4-CDP-2-C-methyl-D-erythritol + ATP = 4-CDP-2-C-methyl-D-erythritol 2-phosphate + ADP + H(+). It participates in isoprenoid biosynthesis; isopentenyl diphosphate biosynthesis via DXP pathway; isopentenyl diphosphate from 1-deoxy-D-xylulose 5-phosphate: step 3/6. Its function is as follows. Catalyzes the phosphorylation of the position 2 hydroxy group of 4-diphosphocytidyl-2C-methyl-D-erythritol. This is 4-diphosphocytidyl-2-C-methyl-D-erythritol kinase from Nitratidesulfovibrio vulgaris (strain ATCC 29579 / DSM 644 / CCUG 34227 / NCIMB 8303 / VKM B-1760 / Hildenborough) (Desulfovibrio vulgaris).